Consider the following 549-residue polypeptide: Thermosome subunit alpha (549 aa).

Residues 529–549 form a disordered region; it reads EGRQGAECPPNGCMGGMDMRM.

It belongs to the TCP-1 chaperonin family. As to quaternary structure, forms a Heterooligomeric complex of two stacked eight-membered rings.

Molecular chaperone; binds unfolded polypeptides in vitro, and has a weak ATPase activity. The protein is Thermosome subunit alpha (thsA) of Thermococcus sp. (strain KS-8).